We begin with the raw amino-acid sequence, 432 residues long: Adenylosuccinate synthetase (432 aa).

Residues 13-19 and 41-43 contribute to the GTP site; these read GDEGKGK and GHT. Asp14 (proton acceptor) is an active-site residue. Positions 14 and 41 each coordinate Mg(2+). Residues 14–17, 39–42, Thr130, Arg144, Gln225, Thr240, and Arg304 each bind IMP; these read DEGK and NAGH. Residue His42 is the Proton donor of the active site. 300-306 lines the substrate pocket; sequence ATTGRKR. GTP-binding positions include Arg306, 332–334, and 415–417; these read KLD and STG.

This sequence belongs to the adenylosuccinate synthetase family. In terms of assembly, homodimer. Requires Mg(2+) as cofactor.

The protein resides in the cytoplasm. It catalyses the reaction IMP + L-aspartate + GTP = N(6)-(1,2-dicarboxyethyl)-AMP + GDP + phosphate + 2 H(+). The protein operates within purine metabolism; AMP biosynthesis via de novo pathway; AMP from IMP: step 1/2. In terms of biological role, plays an important role in the de novo pathway of purine nucleotide biosynthesis. Catalyzes the first committed step in the biosynthesis of AMP from IMP. The protein is Adenylosuccinate synthetase of Tolumonas auensis (strain DSM 9187 / NBRC 110442 / TA 4).